Consider the following 140-residue polypeptide: L-fucose mutarotase (140 aa).

The active-site Proton donor is the H22. Substrate is bound by residues D30, R107, and 129–131; that span reads YGN.

Belongs to the RbsD / FucU family. FucU mutarotase subfamily. As to quaternary structure, homodecamer.

The protein resides in the cytoplasm. It carries out the reaction alpha-L-fucose = beta-L-fucose. It functions in the pathway carbohydrate metabolism; L-fucose metabolism. Involved in the anomeric conversion of L-fucose. The sequence is that of L-fucose mutarotase from Shigella boydii serotype 18 (strain CDC 3083-94 / BS512).